A 397-amino-acid polypeptide reads, in one-letter code: Tubby-like protein 8 (397 aa).

Residues 1–16 (MAGSRKVNDLLEENKG) are compositionally biased toward basic and acidic residues. The disordered stretch occupies residues 1–46 (MAGSRKVNDLLEENKGNVDTITGSLSTQKGEDKENVSPEKVSTSVE). The segment covering 17–28 (NVDTITGSLSTQ) has biased composition (polar residues).

The protein belongs to the TUB family. Mostly expressed in roots, flowers and siliques.

This Arabidopsis thaliana (Mouse-ear cress) protein is Tubby-like protein 8.